The sequence spans 311 residues: Pyrimidine-specific ribonucleoside hydrolase RihA (311 aa).

The active site involves His-240.

The protein belongs to the IUNH family. RihA subfamily.

In terms of biological role, hydrolyzes with equal efficiency cytidine or uridine to ribose and cytosine or uracil, respectively. The polypeptide is Pyrimidine-specific ribonucleoside hydrolase RihA (Escherichia coli O81 (strain ED1a)).